A 141-amino-acid chain; its full sequence is Large ribosomal subunit protein uL16 (141 aa).

Belongs to the universal ribosomal protein uL16 family. In terms of assembly, part of the 50S ribosomal subunit.

Binds 23S rRNA and is also seen to make contacts with the A and possibly P site tRNAs. The polypeptide is Large ribosomal subunit protein uL16 (Campylobacter jejuni subsp. jejuni serotype O:6 (strain 81116 / NCTC 11828)).